We begin with the raw amino-acid sequence, 95 residues long: MRQYELMIILDPSQDERTVAPSLDKFLEVVRKDKGDVVKVDVWGKRRLAYPIDKKEEGVYAVVDLKCESATVLELDRVLNLNDGVLRTKVLRLDK.

The protein belongs to the bacterial ribosomal protein bS6 family.

Its function is as follows. Binds together with bS18 to 16S ribosomal RNA. In Corynebacterium glutamicum (strain ATCC 13032 / DSM 20300 / JCM 1318 / BCRC 11384 / CCUG 27702 / LMG 3730 / NBRC 12168 / NCIMB 10025 / NRRL B-2784 / 534), this protein is Small ribosomal subunit protein bS6.